The chain runs to 257 residues: UPF0246 protein Mpe_A2092 (257 aa).

The protein belongs to the UPF0246 family.

The protein is UPF0246 protein Mpe_A2092 of Methylibium petroleiphilum (strain ATCC BAA-1232 / LMG 22953 / PM1).